The following is a 237-amino-acid chain: Phosphoribosylaminoimidazole-succinocarboxamide synthase (237 aa).

It belongs to the SAICAR synthetase family.

It catalyses the reaction 5-amino-1-(5-phospho-D-ribosyl)imidazole-4-carboxylate + L-aspartate + ATP = (2S)-2-[5-amino-1-(5-phospho-beta-D-ribosyl)imidazole-4-carboxamido]succinate + ADP + phosphate + 2 H(+). The protein operates within purine metabolism; IMP biosynthesis via de novo pathway; 5-amino-1-(5-phospho-D-ribosyl)imidazole-4-carboxamide from 5-amino-1-(5-phospho-D-ribosyl)imidazole-4-carboxylate: step 1/2. In Yersinia enterocolitica serotype O:8 / biotype 1B (strain NCTC 13174 / 8081), this protein is Phosphoribosylaminoimidazole-succinocarboxamide synthase.